The chain runs to 1323 residues: MATRVASVFSSLTDVGIKAALQDEAYKRIKSNLREAEIINPYSVDARGAEALEELAIITNPHSIRLHTHAAAKSIENQMLNIVGHALPKEPVTFLFLKRGKLRYLSRGRIKDIFQNQEIEPRDVARYEHKTIVQKSLLLNTRVAYISDTLHFLRPRYIIDLFSQNVFLDVLYATVVLPVEASFKHPSQNPAIYTINYNYGGFQYLPGNHGGGAYSHEFEDLDWLKYGKFIYRWVDYRTDPISGKRVGTPKELVVTCQLVESLGANHLFIFKRGDLKTPRVRTFAKDKSVTFPDLFYPEEENANFPVDAELATKLFLYVKTLKTVTSQDVHGKLRQLLRSDELTRFSPMQLTHMVNYFMVVAHLDSCNDYSMLLGSSVWTQLTAPIQSKLRKLTEFFKGKSSFGKFCAALKWKTATYSLEVVDYVETRRDSFEPHPLDSLPDADDRDVNYDTDVSEDEADEKPAPKAPTSTPVPDTTPPASPAAPADAEYTQCWAAWDTVIRKHGFKGNQAQFDDDGNLITPIAEIKSLPKDSPRCAPELIKSLQEIARTPTLVEIDSKRSNAFGSDVKNGRIGMILKKQPNDWRLSFAAKCEHTSRKVHACVIHGAGGSGKSQRLQDWMRSLKKNSRECTVILPTAELRTDWVNKVPKQSLDTFKTWEKGLVQPPNRVVILDDYGKLPAGYPEALCANYPNIELLILTGDSRQSVHNEHNKQAATASLESNIEFWTQYCRFYVNATHRNVKRLANALGVYGERDEPLKVTCSSHVYDGWPVLAPGLLKAGNLAECGRRAFTYAGCQGLTAPRVQILLDNDTPLCSQRVMYTALSRAVNEIHFVNTGPSGDDFWTKLDCTPFLKTFLELSREIEIPEAKCQETAPAEATVKTHFPVENPNLVLEPYVEKMAEKFDRELYSKEYGYSNAIQTEDPVIQLFPHQQAKDDTLMWATIDQRLAITTKSENETEFALKKDIGDLLFINYHRAMKLPKNPIPFDKDLWQSCKNEVQKTYLSKDVGSIVNGVARQDPDFPINEIKLFLKSQWVKKVEKLGMVVKPGQTIASFAQAPVMLYGTMARYMRRMREVYQPSNIFINCEKTPADLDEWAKANWNFEGLAHSNDFTAFDQSQDGAMLQFEVIKAKFHNIPSDIINSYVELKTNAKVFLGVLKIMRLSGEGPTFDANTECSIAYHHTKYWVEPDVAQVYAGDDSAQDRTPVPRPSFNKIKDRLGLVSKPLTHRQVPGDFATFCGWIITPKGVIKDPLKLYASLQLAIRRGKSHEVALSYAHDAGLAYRLGDDLHSVLTFDEAHAHQCTVRDLVKLNKVEVLRPIWALD.

Positions 60-224 (NPHSIRLHTH…SHEFEDLDWL (165 aa)) constitute an Alphavirus-like MT domain. The tract at residues 432 to 486 (EPHPLDSLPDADDRDVNYDTDVSEDEADEKPAPKAPTSTPVPDTTPPASPAAPAD) is disordered. The 162-residue stretch at 572–733 (IGMILKKQPN…FWTQYCRFYV (162 aa)) folds into the (+)RNA virus helicase ATP-binding domain. 605–612 (GAGGSGKS) contacts ATP. The (+)RNA virus helicase C-terminal domain occupies 734 to 867 (NATHRNVKRL…LSREIEIPEA (134 aa)). The 108-residue stretch at 1104-1211 (GLAHSNDFTA…DRTPVPRPSF (108 aa)) folds into the RdRp catalytic domain.

The protein belongs to the potexvirus/carlavirus RNA replication protein family.

The enzyme catalyses RNA(n) + a ribonucleoside 5'-triphosphate = RNA(n+1) + diphosphate. It catalyses the reaction ATP + H2O = ADP + phosphate + H(+). RNA replication. The central part of this protein possibly functions as an ATP-binding helicase. The sequence is that of RNA replication protein from Strawberry mild yellow edge-associated virus (SMYEaV).